Consider the following 347-residue polypeptide: Selenide, water dikinase (347 aa).

Residue cysteine 16 is part of the active site. Residues lysine 19 and 47 to 49 contribute to the ATP site; that span reads TRD. Aspartate 50 is a Mg(2+) binding site. ATP-binding positions include aspartate 67, aspartate 90, and 138–140; that span reads GHS. Aspartate 90 contacts Mg(2+). Aspartate 226 is a binding site for Mg(2+).

It belongs to the selenophosphate synthase 1 family. Class I subfamily. In terms of assembly, homodimer. The cofactor is Mg(2+).

The enzyme catalyses hydrogenselenide + ATP + H2O = selenophosphate + AMP + phosphate + 2 H(+). Synthesizes selenophosphate from selenide and ATP. In Photorhabdus laumondii subsp. laumondii (strain DSM 15139 / CIP 105565 / TT01) (Photorhabdus luminescens subsp. laumondii), this protein is Selenide, water dikinase.